The chain runs to 67 residues: uncharacterized protein (67 aa).

The next 2 membrane-spanning stretches (helical) occupy residues 6-26 and 38-58; these read GQLWIVFMWVSGVVCGICVLM and NNIIIIIIIIMMIKIMKIIII.

The protein resides in the membrane. This is an uncharacterized protein from Dictyostelium discoideum (Social amoeba).